The primary structure comprises 231 residues: Large ribosomal subunit protein uL1 (231 aa).

Belongs to the universal ribosomal protein uL1 family. As to quaternary structure, part of the 50S ribosomal subunit.

Its function is as follows. Binds directly to 23S rRNA. The L1 stalk is quite mobile in the ribosome, and is involved in E site tRNA release. Functionally, protein L1 is also a translational repressor protein, it controls the translation of the L11 operon by binding to its mRNA. This Stutzerimonas stutzeri (strain A1501) (Pseudomonas stutzeri) protein is Large ribosomal subunit protein uL1.